The sequence spans 272 residues: Low-density lipoprotein receptor class A domain-containing protein 2 (272 aa).

A signal peptide spans M1–A25. Residues L26–S233 lie on the Extracellular side of the membrane. N-linked (GlcNAc...) asparagine glycosylation is present at N97. The region spanning P172–R214 is the LDL-receptor class A domain. Disulfide bonds link C173-C184, C179-C199, and C191-C213. Residues G202–E272 are disordered. Residues P220–P236 show a composition bias toward polar residues. A helical membrane pass occupies residues L234–A250. Residues E251–E272 lie on the Cytoplasmic side of the membrane.

The protein belongs to the LDLR family.

The protein resides in the membrane. In Homo sapiens (Human), this protein is Low-density lipoprotein receptor class A domain-containing protein 2 (LDLRAD2).